The chain runs to 264 residues: S-adenosylmethionine decarboxylase proenzyme (264 aa).

Catalysis depends on Ser111, which acts as the Schiff-base intermediate with substrate; via pyruvic acid. Position 111 is a pyruvic acid (Ser); by autocatalysis (Ser111). The Proton acceptor; for processing activity role is filled by His116. Residue Cys139 is the Proton donor; for catalytic activity of the active site.

The protein belongs to the prokaryotic AdoMetDC family. Type 2 subfamily. Heterooctamer of four alpha and four beta chains arranged as a tetramer of alpha/beta heterodimers. Pyruvate serves as cofactor. Post-translationally, is synthesized initially as an inactive proenzyme. Formation of the active enzyme involves a self-maturation process in which the active site pyruvoyl group is generated from an internal serine residue via an autocatalytic post-translational modification. Two non-identical subunits are generated from the proenzyme in this reaction, and the pyruvate is formed at the N-terminus of the alpha chain, which is derived from the carboxyl end of the proenzyme. The post-translation cleavage follows an unusual pathway, termed non-hydrolytic serinolysis, in which the side chain hydroxyl group of the serine supplies its oxygen atom to form the C-terminus of the beta chain, while the remainder of the serine residue undergoes an oxidative deamination to produce ammonia and the pyruvoyl group blocking the N-terminus of the alpha chain.

It carries out the reaction S-adenosyl-L-methionine + H(+) = S-adenosyl 3-(methylsulfanyl)propylamine + CO2. It functions in the pathway amine and polyamine biosynthesis; S-adenosylmethioninamine biosynthesis; S-adenosylmethioninamine from S-adenosyl-L-methionine: step 1/1. In terms of biological role, catalyzes the decarboxylation of S-adenosylmethionine to S-adenosylmethioninamine (dcAdoMet), the propylamine donor required for the synthesis of the polyamines spermine and spermidine from the diamine putrescine. The protein is S-adenosylmethionine decarboxylase proenzyme of Geobacillus thermodenitrificans (strain NG80-2).